A 296-amino-acid polypeptide reads, in one-letter code: Protoheme IX farnesyltransferase (296 aa).

The Cytoplasmic portion of the chain corresponds to 1–9 (MMFKQYLQV). A helical membrane pass occupies residues 10-28 (TKPGIIFGNLISVIGGFLL). Over 29–37 (ASKGSIDYP) the chain is Periplasmic. A helical membrane pass occupies residues 38-56 (LFIYTLVGVSLVVASGCVF). At 57-78 (NNYIDRDIDRKMERTKNRVLVK) the chain is on the cytoplasmic side. The chain crosses the membrane as a helical span at residues 79–97 (GLISPAVSLVYATLLGFAG). Residues 98–107 (FMLLWFGANP) are Periplasmic-facing. Residues 108–126 (LACWLGVMGFVVYVGVYSL) traverse the membrane as a helical segment. Over 127–197 (YMKRHSVYGT…YQAANIPVLP (71 aa)) the chain is Cytoplasmic. Residues 198–216 (VVKGISVAKNHITLYIIAF) form a helical membrane-spanning segment. At 217–228 (AVATLMLSLGGY) the chain is on the periplasmic side. A helical membrane pass occupies residues 229 to 247 (AGYKYLVVAAAVSVWWLGM). Residues 248–268 (ALRGYKVADDRIWARKLFGFS) lie on the Cytoplasmic side of the membrane. The helical transmembrane segment at 269–287 (IIAITALSVMMSVDFMVPD) threads the bilayer. Residues 288-296 (SHTLLAAVW) lie on the Periplasmic side of the membrane.

Belongs to the UbiA prenyltransferase family. Protoheme IX farnesyltransferase subfamily.

It localises to the cell inner membrane. It catalyses the reaction heme b + (2E,6E)-farnesyl diphosphate + H2O = Fe(II)-heme o + diphosphate. It functions in the pathway porphyrin-containing compound metabolism; heme O biosynthesis; heme O from protoheme: step 1/1. Converts heme B (protoheme IX) to heme O by substitution of the vinyl group on carbon 2 of heme B porphyrin ring with a hydroxyethyl farnesyl side group. In Shigella sonnei (strain Ss046), this protein is Protoheme IX farnesyltransferase.